The chain runs to 516 residues: Cytochrome P450 1A2 (516 aa).

A glycan (O-linked (GlcNAc) serine) is linked at serine 69. Residue phenylalanine 226 participates in substrate binding. Position 458 (cysteine 458) interacts with heme.

Belongs to the cytochrome P450 family. In terms of assembly, interacts with PGRMC1; the interaction requires PGRMC1 homodimerization. Heme is required as a cofactor.

The protein resides in the endoplasmic reticulum membrane. It localises to the microsome membrane. It carries out the reaction an organic molecule + reduced [NADPH--hemoprotein reductase] + O2 = an alcohol + oxidized [NADPH--hemoprotein reductase] + H2O + H(+). It catalyses the reaction 17beta-estradiol + reduced [NADPH--hemoprotein reductase] + O2 = 2-hydroxy-17beta-estradiol + oxidized [NADPH--hemoprotein reductase] + H2O + H(+). The enzyme catalyses 17beta-estradiol + reduced [NADPH--hemoprotein reductase] + O2 = 4-hydroxy-17beta-estradiol + oxidized [NADPH--hemoprotein reductase] + H2O + H(+). The catalysed reaction is estrone + reduced [NADPH--hemoprotein reductase] + O2 = 2-hydroxyestrone + oxidized [NADPH--hemoprotein reductase] + H2O + H(+). It carries out the reaction estrone + reduced [NADPH--hemoprotein reductase] + O2 = 4-hydroxyestrone + oxidized [NADPH--hemoprotein reductase] + H2O + H(+). It catalyses the reaction cholesterol + reduced [NADPH--hemoprotein reductase] + O2 = 25-hydroxycholesterol + oxidized [NADPH--hemoprotein reductase] + H2O + H(+). The enzyme catalyses all-trans-retinol + reduced [NADPH--hemoprotein reductase] + O2 = all-trans-retinal + oxidized [NADPH--hemoprotein reductase] + 2 H2O + H(+). The catalysed reaction is all-trans-retinal + reduced [NADPH--hemoprotein reductase] + O2 = all-trans-retinoate + oxidized [NADPH--hemoprotein reductase] + H2O + 2 H(+). It carries out the reaction (5Z,8Z,11Z,14Z)-eicosatetraenoate + reduced [NADPH--hemoprotein reductase] + O2 = (14R,15S)-epoxy-(5Z,8Z,11Z)-eicosatrienoate + oxidized [NADPH--hemoprotein reductase] + H2O + H(+). It catalyses the reaction (5Z,8Z,11Z,14Z)-eicosatetraenoate + reduced [NADPH--hemoprotein reductase] + O2 = (14S,15R)-epoxy-(5Z,8Z,11Z)-eicosatrienoate + oxidized [NADPH--hemoprotein reductase] + H2O + H(+). The enzyme catalyses (5Z,8Z,11Z,14Z,17Z)-eicosapentaenoate + reduced [NADPH--hemoprotein reductase] + O2 = (17R,18S)-epoxy-(5Z,8Z,11Z,14Z)-eicosatetraenoate + oxidized [NADPH--hemoprotein reductase] + H2O + H(+). The catalysed reaction is (4Z,7Z,10Z,13Z,16Z,19Z)-docosahexaenoate + reduced [NADPH--hemoprotein reductase] + O2 = (19R,20S)-epoxy-(4Z,7Z,10Z,13Z,16Z)-docosapentaenoate + oxidized [NADPH--hemoprotein reductase] + H2O + H(+). It carries out the reaction (5S)-hydroperoxy-(6E,8Z,11Z,14Z)-eicosatetraenoate = 5-oxo-(6E,8Z,11Z,14Z)-eicosatetraenoate + H2O. It catalyses the reaction (12S)-hydroperoxy-(5Z,8Z,10E,14Z)-eicosatetraenoate = 12-oxo-(5Z,8Z,10E,14Z)-eicosatetraenoate + H2O. The enzyme catalyses (15S)-hydroperoxy-(5Z,8Z,11Z,13E)-eicosatetraenoate = 15-oxo-(5Z,8Z,11Z,13E)-eicosatetraenoate + H2O. The catalysed reaction is (13S)-hydroperoxy-(9Z,11E)-octadecadienoate = 13-oxo-(9Z,11E)-octadecadienoate + H2O. It carries out the reaction (5Z,8Z,11Z,14Z)-eicosatetraenoate + reduced [NADPH--hemoprotein reductase] + O2 = 13-hydroxy-(5Z,8Z,11Z,14Z)-eicosatetraenoate + oxidized [NADPH--hemoprotein reductase] + H2O + H(+). It catalyses the reaction (5Z,8Z,11Z,14Z)-eicosatetraenoate + reduced [NADPH--hemoprotein reductase] + O2 = 19-hydroxy-(5Z,8Z,11Z,14Z)-eicosatetraenoate + oxidized [NADPH--hemoprotein reductase] + H2O + H(+). The enzyme catalyses (9Z,12Z)-octadecadienoate + reduced [NADPH--hemoprotein reductase] + O2 = 11-hydroxy-(9Z,12Z)-octadecadienoate + oxidized [NADPH--hemoprotein reductase] + H2O + H(+). It participates in cofactor metabolism; retinol metabolism. It functions in the pathway steroid metabolism; cholesterol metabolism. The protein operates within lipid metabolism; arachidonate metabolism. Its function is as follows. A cytochrome P450 monooxygenase involved in the metabolism of various endogenous substrates, including fatty acids, steroid hormones and vitamins. Mechanistically, uses molecular oxygen inserting one oxygen atom into a substrate, and reducing the second into a water molecule, with two electrons provided by NADPH via cytochrome P450 reductase (NADPH--hemoprotein reductase). Catalyzes the hydroxylation of carbon-hydrogen bonds. Exhibits high catalytic activity for the formation of hydroxyestrogens from estrone (E1) and 17beta-estradiol (E2), namely 2-hydroxy E1 and E2. Metabolizes cholesterol toward 25-hydroxycholesterol, a physiological regulator of cellular cholesterol homeostasis. May act as a major enzyme for all-trans retinoic acid biosynthesis in the liver. Catalyzes two successive oxidative transformation of all-trans retinol to all-trans retinal and then to the active form all-trans retinoic acid. Primarily catalyzes stereoselective epoxidation of the last double bond of polyunsaturated fatty acids (PUFA), displaying a strong preference for the (R,S) stereoisomer. Catalyzes bisallylic hydroxylation and omega-1 hydroxylation of PUFA. May also participate in eicosanoids metabolism by converting hydroperoxide species into oxo metabolites (lipoxygenase-like reaction, NADPH-independent). Plays a role in the oxidative metabolism of xenobiotics. Catalyzes the N-hydroxylation of heterocyclic amines and the O-deethylation of phenacetin. Metabolizes caffeine via N3-demethylation. This chain is Cytochrome P450 1A2 (CYP1A2), found in Balaenoptera acutorostrata (Common minke whale).